The sequence spans 446 residues: Phosphoglucosamine mutase (446 aa).

The active-site Phosphoserine intermediate is Ser99. The Mg(2+) site is built by Ser99, Asp242, Asp244, and Asp246. A Phosphoserine modification is found at Ser99.

This sequence belongs to the phosphohexose mutase family. Mg(2+) is required as a cofactor. Activated by phosphorylation.

It carries out the reaction alpha-D-glucosamine 1-phosphate = D-glucosamine 6-phosphate. Its function is as follows. Catalyzes the conversion of glucosamine-6-phosphate to glucosamine-1-phosphate. The sequence is that of Phosphoglucosamine mutase from Campylobacter concisus (strain 13826).